Reading from the N-terminus, the 158-residue chain is Pyruvoyl-dependent arginine decarboxylase (158 aa).

At serine 44 the chain carries Pyruvic acid (Ser).

The protein belongs to the PdaD family. Requires pyruvate as cofactor.

It carries out the reaction L-arginine + H(+) = agmatine + CO2. The sequence is that of Pyruvoyl-dependent arginine decarboxylase from Thermococcus sibiricus (strain DSM 12597 / MM 739).